A 440-amino-acid polypeptide reads, in one-letter code: Inner membrane metabolite transport protein YhjE (440 aa).

Topologically, residues 1–34 (MQATATTLDHEQEYTPINSRNKVLVASLIGTAIE) are cytoplasmic. The chain crosses the membrane as a helical span at residues 35 to 55 (FFDFYIYATAAVIVFPHIFFP). The Periplasmic portion of the chain corresponds to 56-66 (QGDPTAATLQS). Residues 67-87 (LATFAIAFVARPIGSAVFGHF) traverse the membrane as a helical segment. Topologically, residues 88 to 108 (GDRVGRKATLVASLLTMGIST) are cytoplasmic. 2 consecutive transmembrane segments (helical) span residues 109–129 (VVIG…LLLA) and 130–150 (LARF…ALLA). Residues 151 to 167 (TENAPPRKRALYGSFPQ) are Cytoplasmic-facing. The chain crosses the membrane as a helical span at residues 168-188 (LGAPIGFFFANGTFLLLSWLL). The Periplasmic portion of the chain corresponds to 189–192 (TDEQ). Residues 193–213 (FMSWGWRVPFIFSAVLVIIGL) traverse the membrane as a helical segment. At 214 to 248 (YVRVSLHESPVFEKVAKAKKQVKIPLGTLLTKHVR) the chain is on the cytoplasmic side. A helical transmembrane segment spans residues 249–269 (VTVLGTFIMLATYTLFYIMTV). At 270–289 (YSMTFSTAAAPVGLGLPRNE) the chain is on the periplasmic side. A helical transmembrane segment spans residues 290–310 (VLWMLMMAVIGFGVMVPVAGL). Residues 311 to 320 (LADAFGRRKS) are Cytoplasmic-facing. A helical membrane pass occupies residues 321-341 (MVIITTLIILFALFAFNPLLG). Over 342–345 (SGNP) the chain is Periplasmic. A helical transmembrane segment spans residues 346–366 (ILVFAFLLLGLSLMGLTFGPM). At 367 to 384 (GALLPELFPTEVRYTGAS) the chain is on the cytoplasmic side. A helical membrane pass occupies residues 385 to 405 (FSYNVASILGASVAPYIAAWL). The Periplasmic portion of the chain corresponds to 406 to 410 (QTNYG). A helical membrane pass occupies residues 411–431 (LGAVGLYLAAMAGLTLIALLL). Residues 432–440 (THETRHQSL) lie on the Cytoplasmic side of the membrane.

Belongs to the major facilitator superfamily. Metabolite:H+ Symporter (MHS) family (TC 2.A.1.6) family.

It is found in the cell inner membrane. This is Inner membrane metabolite transport protein YhjE (yhjE) from Escherichia coli (strain K12).